The primary structure comprises 397 residues: Enoyl-[acyl-carrier-protein] reductase [NADH] (397 aa).

NAD(+)-binding positions include 48-53 (GASTGY), 74-75 (FE), 111-112 (DA), and 139-140 (VA). Residue Tyr225 participates in substrate binding. Tyr235 serves as the catalytic Proton donor. NAD(+) contacts are provided by residues Lys244 and 273–275 (VVT).

It belongs to the TER reductase family. As to quaternary structure, monomer.

The enzyme catalyses a 2,3-saturated acyl-[ACP] + NAD(+) = a (2E)-enoyl-[ACP] + NADH + H(+). It participates in lipid metabolism; fatty acid biosynthesis. Its function is as follows. Involved in the final reduction of the elongation cycle of fatty acid synthesis (FAS II). Catalyzes the reduction of a carbon-carbon double bond in an enoyl moiety that is covalently linked to an acyl carrier protein (ACP). This Burkholderia thailandensis (strain ATCC 700388 / DSM 13276 / CCUG 48851 / CIP 106301 / E264) protein is Enoyl-[acyl-carrier-protein] reductase [NADH].